Consider the following 118-residue polypeptide: NADH-quinone oxidoreductase subunit A (118 aa).

The next 3 membrane-spanning stretches (helical) occupy residues 5–25 (YLGISLFLAAGLIIPFLAFAV), 61–81 (FLYALVFVAFDVETVFLYPWA), and 90–110 (FAIVEMFIFITILVVGFWYAW).

Belongs to the complex I subunit 3 family. NDH-1 is composed of 14 different subunits. Subunits NuoA, H, J, K, L, M, N constitute the membrane sector of the complex.

It localises to the cell membrane. The catalysed reaction is a quinone + NADH + 5 H(+)(in) = a quinol + NAD(+) + 4 H(+)(out). Functionally, NDH-1 shuttles electrons from NADH, via FMN and iron-sulfur (Fe-S) centers, to quinones in the respiratory chain. The immediate electron acceptor for the enzyme in this species is believed to be a menaquinone. Couples the redox reaction to proton translocation (for every two electrons transferred, four hydrogen ions are translocated across the cytoplasmic membrane), and thus conserves the redox energy in a proton gradient. This Heliobacterium modesticaldum (strain ATCC 51547 / Ice1) protein is NADH-quinone oxidoreductase subunit A.